A 347-amino-acid polypeptide reads, in one-letter code: Merozoite surface protein P12 (347 aa).

An N-terminal signal peptide occupies residues 1–25 (MIKLSKKYCLGISFVLYILLSVCEG). 2 consecutive 6-Cys domains span residues 27–172 (KNLT…IPSL) and 175–305 (KVKG…ISSS). Asn-28 carries an N-linked (GlcNAc...) asparagine glycan. 3 cysteine pairs are disulfide-bonded: Cys-31–Cys-53, Cys-67–Cys-138, and Cys-81–Cys-136. Residues Asn-147, Asn-200, Asn-228, Asn-242, Asn-265, and Asn-322 are each glycosylated (N-linked (GlcNAc...) asparagine). Intrachain disulfides connect Cys-179–Cys-211, Cys-225–Cys-286, and Cys-236–Cys-284. Residue Asn-322 is the site of GPI-anchor amidated asparagine attachment. A propeptide spans 323 to 347 (SSFLTLSSYCAFITFIITSFLSFIL) (removed in mature form).

As to quaternary structure, heterodimer; heterodimerizes with PF41. May form an antiparallel heterodimer with PF41. Post-translationally, processed into a soluble form.

Its subcellular location is the cell surface. It localises to the cell membrane. This Plasmodium falciparum (isolate 3D7) protein is Merozoite surface protein P12 (PF12).